A 291-amino-acid chain; its full sequence is Sulfotransferase 1A1 (291 aa).

44-49 (KSGTNW) is a 3'-phosphoadenylyl sulfate binding site. 102–104 (KTH) serves as a coordination point for substrate. H104 functions as the Proton acceptor in the catalytic mechanism. 3'-phosphoadenylyl sulfate contacts are provided by residues R126, S134, Y189, 223–228 (TSFKKM), and 251–255 (FMRKG). Phosphoserine is present on S134.

It belongs to the sulfotransferase 1 family. In terms of assembly, homodimer. Expressed in brain, colon, liver, and small intestine of mice colonized with B.ovatus and L.plantarum.

It is found in the cytoplasm. It carries out the reaction a phenol + 3'-phosphoadenylyl sulfate = an aryl sulfate + adenosine 3',5'-bisphosphate + H(+). The enzyme catalyses 17beta-estradiol + 3'-phosphoadenylyl sulfate = 17beta-estradiol 3-sulfate + adenosine 3',5'-bisphosphate + H(+). It catalyses the reaction 4-ethylphenol + 3'-phosphoadenylyl sulfate = 4-ethylphenyl sulfate + adenosine 3',5'-bisphosphate + H(+). The catalysed reaction is 4-nitrophenol + 3'-phosphoadenylyl sulfate = 4-nitrophenyl sulfate + adenosine 3',5'-bisphosphate. It carries out the reaction dopamine + 3'-phosphoadenylyl sulfate = dopamine 3-O-sulfate + adenosine 3',5'-bisphosphate + H(+). The enzyme catalyses dopamine + 3'-phosphoadenylyl sulfate = dopamine 4-O-sulfate + adenosine 3',5'-bisphosphate + H(+). It catalyses the reaction 3,3',5-triiodo-L-thyronine + 3'-phosphoadenylyl sulfate = 3,3',5-triiodo-L-thyronine sulfate + adenosine 3',5'-bisphosphate + H(+). The catalysed reaction is 3,3',5'-triiodo-L-thyronine + 3'-phosphoadenylyl sulfate = 3,3',5'-triiodo-L-thyronine sulfate + adenosine 3',5'-bisphosphate + H(+). It carries out the reaction 3,3'-diiodo-L-thyronine + 3'-phosphoadenylyl sulfate = 3,3'-diiodo-L-thyronine sulfate + adenosine 3',5'-bisphosphate + H(+). The enzyme catalyses L-thyroxine + 3'-phosphoadenylyl sulfate = L-thyroxine sulfate + adenosine 3',5'-bisphosphate + H(+). Functionally, sulfotransferase that utilizes 3'-phospho-5'-adenylyl sulfate (PAPS) as sulfonate donor to catalyze the sulfate conjugation of a wide variety of acceptor molecules bearing a hydroxyl or an amine group. Sulfonation increases the water solubility of most compounds, and therefore their renal excretion, but it can also result in bioactivation to form active metabolites. Displays broad substrate specificity for small phenolic compounds. Plays an important role in the sulfonation of endogenous molecules such as steroid hormones. Mediates also the metabolic activation of carcinogenic N-hydroxyarylamines leading to highly reactive intermediates capable of forming DNA adducts, potentially resulting in mutagenesis. May play a role in gut microbiota-host metabolic interaction. O-sulfonates 4-ethylphenol (4-EP), a dietary tyrosine-derived metabolite produced by gut bacteria. The product 4-EPS crosses the blood-brain barrier and may negatively regulate oligodendrocyte maturation and myelination, affecting the functional connectivity of different brain regions associated with the limbic system. Catalyzes the sulfate conjugation of dopamine. Catalyzes the sulfation of T4 (L-thyroxine/3,5,3',5'-tetraiodothyronine), T3 (3,5,3'-triiodothyronine), rT3 (3,3',5'-triiodothyronine) and 3,3'-T2 (3,3'-diiodothyronine), with a substrate preference of 3,3'-T2 &gt; rT3 &gt; T3 &gt; T4. This Mus musculus (Mouse) protein is Sulfotransferase 1A1 (Sult1a1).